A 69-amino-acid chain; its full sequence is Conotoxin Eb6.20 (69 aa).

The signal sequence occupies residues 1–17 (VLIIAVLFLTACQLTTA). Residues 18-41 (ETYSRGRQKHRARRSTDKNSKWTR) constitute a propeptide that is removed on maturation. Disulfide bonds link Cys43/Cys57, Cys50/Cys61, and Cys56/Cys68.

Belongs to the conotoxin O1 superfamily. As to expression, expressed by the venom duct.

The protein localises to the secreted. The sequence is that of Conotoxin Eb6.20 (E1) from Conus ebraeus (Hebrew cone).